The chain runs to 150 residues: MIRVIMLLVLVWMTPMISWATEVVKDVSGQKVEVNADQLKRGKRLFNTHCSACHVGGITKTNPNIGLDLESLSLATPARNNLDALVDYMKNPTTYDGSESIAQIHPSIASSDIFPKMRDLSEDDLYAIASHILTQAQIQAEKWGGGKIYY.

The signal sequence occupies residues M1–A20. Heme c is bound by residues C50, C53, H54, and H105.

The protein belongs to the cytochrome c family. PsbV subfamily. PSII is composed of 1 copy each of membrane proteins PsbA, PsbB, PsbC, PsbD, PsbE, PsbF, PsbH, PsbI, PsbJ, PsbK, PsbL, PsbM, PsbT, PsbY, PsbZ, Psb30/Ycf12, at least 3 peripheral proteins of the oxygen-evolving complex and a large number of cofactors. It forms dimeric complexes. The extrinsic subunits in red algae are PsbO (OEC33), PsbQ', cytochrome c-550 and PsbU. Heme c is required as a cofactor.

Its subcellular location is the plastid. It localises to the chloroplast thylakoid membrane. Its function is as follows. One of the extrinsic, lumenal subunits of photosystem II (PSII). PSII is a light-driven water plastoquinone oxidoreductase, using light energy to abstract electrons from H(2)O, generating a proton gradient subsequently used for ATP formation. The extrinsic proteins stabilize the structure of photosystem II oxygen-evolving complex (OEC), the ion environment of oxygen evolution and protect the OEC against heat-induced inactivation. This Cyanidioschyzon merolae (strain NIES-3377 / 10D) (Unicellular red alga) protein is Photosystem II extrinsic protein V.